Here is a 202-residue protein sequence, read N- to C-terminus: GPI-anchored hemophore cfmB (202 aa).

An N-terminal signal peptide occupies residues 1-18; it reads MHFSRTSLILFAAGLASA. The region spanning 19-108 is the CFEM domain; the sequence is QLPNVPGCSL…STTASETATT (90 aa). 4 disulfide bridges follow: Cys26-Cys67, Cys30-Cys62, Cys40-Cys48, and Cys50-Cys83. Asp45 lines the heme pocket. Residues 94 to 171 are disordered; it reads PVGAASTTAS…PSSQSTSASA (78 aa). The segment covering 97 to 171 has biased composition (low complexity); that stretch reads AASTTASETA…PSSQSTSASA (75 aa). Asn180 is lipidated: GPI-anchor amidated asparagine. Positions 181-202 are cleaved as a propeptide — removed in mature form; that stretch reads AGSEKANVAGVVAVAAAALYLL.

This sequence belongs to the RBT5 family. In terms of processing, the GPI-anchor is attached to the protein in the endoplasmic reticulum and serves to target the protein to the cell surface. There, the glucosamine-inositol phospholipid moiety is cleaved off and the GPI-modified mannoprotein is covalently attached via its lipidless GPI glycan remnant to the 1,6-beta-glucan of the outer cell wall layer.

It is found in the secreted. The protein localises to the cell wall. It localises to the cell membrane. GPI-anchored cell wall protein involved in stabilizing the cell wall. Not implicated in virulence, heme uptake and biofilm formation. The sequence is that of GPI-anchored hemophore cfmB from Aspergillus fumigatus (strain ATCC MYA-4609 / CBS 101355 / FGSC A1100 / Af293) (Neosartorya fumigata).